Here is a 160-residue protein sequence, read N- to C-terminus: Transcription elongation factor GreA (160 aa).

Positions 1-31 (MAEKTYPMTLEEKEKLEKELEELKLVRRPEI) form a coiled coil.

It belongs to the GreA/GreB family.

Functionally, necessary for efficient RNA polymerase transcription elongation past template-encoded arresting sites. The arresting sites in DNA have the property of trapping a certain fraction of elongating RNA polymerases that pass through, resulting in locked ternary complexes. Cleavage of the nascent transcript by cleavage factors such as GreA or GreB allows the resumption of elongation from the new 3'terminus. GreA releases sequences of 2 to 3 nucleotides. The chain is Transcription elongation factor GreA from Streptococcus suis (strain 98HAH33).